The primary structure comprises 724 residues: WD repeat-containing protein 91 (724 aa).

Residues 178–207 are a coiled coil; it reads FDSEVQRITSLQEDNEQLRQTVFALQGESR. Residues 249–365 are disordered; sequence SRNFFSTFLP…PDQTDSANQT (117 aa). 2 stretches are compositionally biased toward polar residues: residues 270-279 and 303-315; these read GPQSSPTQSA and SVSS…STSH. Residue S274 is modified to Phosphoserine. The segment covering 322–333 has biased composition (basic and acidic residues); that stretch reads QDHEKERKELFS. Polar residues predominate over residues 349-365; sequence DTQTEAPPDQTDSANQT. 7 WD repeats span residues 389–428, 431–471, 499–532, 537–576, 579–618, 641–679, and 686–724; these read EHHS…QTKA, MSKS…CLYE, AHSG…QQLQ, PGPV…SALS, AHDG…VKQS, VQVP…AGLE, and GHKA…AQKP.

Belongs to the WD repeat WDR91 family.

The protein localises to the early endosome membrane. The protein resides in the late endosome membrane. Its function is as follows. Functions as a negative regulator of the PI3 kinase/PI3K activity associated with endosomal membranes. By modifying the phosphatidylinositol 3-phosphate/PtdInsP3 content of endosomal membranes may regulate endosome fusion, recycling, sorting and early to late endosome transport. In Danio rerio (Zebrafish), this protein is WD repeat-containing protein 91 (wdr91).